An 81-amino-acid polypeptide reads, in one-letter code: Photosystem I iron-sulfur center (81 aa).

2 consecutive 4Fe-4S ferredoxin-type domains span residues 2–31 (SHIV…MVPW) and 39–68 (MASA…VRVY). [4Fe-4S] cluster is bound by residues Cys-11, Cys-14, Cys-17, Cys-21, Cys-48, Cys-51, Cys-54, and Cys-58.

The eukaryotic PSI reaction center is composed of at least 11 subunits. The cofactor is [4Fe-4S] cluster.

It localises to the plastid. It is found in the chloroplast thylakoid membrane. The enzyme catalyses reduced [plastocyanin] + hnu + oxidized [2Fe-2S]-[ferredoxin] = oxidized [plastocyanin] + reduced [2Fe-2S]-[ferredoxin]. Functionally, apoprotein for the two 4Fe-4S centers FA and FB of photosystem I (PSI); essential for photochemical activity. FB is the terminal electron acceptor of PSI, donating electrons to ferredoxin. The C-terminus interacts with PsaA/B/D and helps assemble the protein into the PSI complex. Required for binding of PsaD and PsaE to PSI. PSI is a plastocyanin/cytochrome c6-ferredoxin oxidoreductase, converting photonic excitation into a charge separation, which transfers an electron from the donor P700 chlorophyll pair to the spectroscopically characterized acceptors A0, A1, FX, FA and FB in turn. This chain is Photosystem I iron-sulfur center, found in Stigeoclonium helveticum (Green alga).